Reading from the N-terminus, the 984-residue chain is Putative formate dehydrogenase SAV2309 (984 aa).

The 2Fe-2S ferredoxin-type domain occupies 3–79 (EHLVVTLDGK…PMTVNTVNND (77 aa)). [2Fe-2S] cluster-binding residues include Cys37, Cys48, Cys51, and Cys63. Residues 79–119 (DVKDAQKEALDRILEKHMLYCTVCDYNNGDCEIHNTMDAWG) form the 4Fe-4S His(Cys)3-ligated-type domain. Residues His95, Cys99, Cys102, Cys109, Cys147, Cys150, Cys153, Cys157, Cys190, Cys193, Cys196, Cys200, Cys264, Cys267, Cys271, and Cys299 each coordinate [4Fe-4S] cluster. 4Fe-4S ferredoxin-type domains lie at 138–165 (PFYR…VNET) and 181–211 (NDVP…VNME). Residues 252–984 (MRKERIKKTK…YVFPGNQVDK (733 aa)) are formate dehydrogenase. The 4Fe-4S Mo/W bis-MGD-type domain maps to 257–313 (IKKTKTVCTYCGVGCSFEVWTKDREILKVQPSHDSPANKIVTCVKGKFSWGHINSDQ).

It in the C-terminal section; belongs to the prokaryotic molybdopterin-containing oxidoreductase family. Requires [2Fe-2S] cluster as cofactor. The cofactor is [4Fe-4S] cluster. Mo-bis(molybdopterin guanine dinucleotide) serves as cofactor.

It carries out the reaction formate + NAD(+) = CO2 + NADH. In Staphylococcus aureus (strain Mu50 / ATCC 700699), this protein is Putative formate dehydrogenase SAV2309.